We begin with the raw amino-acid sequence, 622 residues long: Iron transport multicopper oxidase fetC (622 aa).

Residues 1–20 form the signal peptide; it reads MARLVHLTAVLAASIRLAAA. At 21–552 the chain is on the extracellular side; sequence ATINHDFNVT…DPLPAGFTTR (532 aa). N-linked (GlcNAc...) asparagine glycans are attached at residues Asn-28 and Asn-74. 2 Plastocyanin-like domains span residues 29–144 and 154–301; these read VTWV…VHDP and EEIV…SYDK. Cu cation-binding residues include His-80 and His-82. N-linked (GlcNAc...) asparagine glycans are attached at residues Asn-87 and Asn-112. Cu cation contacts are provided by His-124 and His-126. Residues Asn-194, Asn-198, Asn-265, Asn-292, and Asn-358 are each glycosylated (N-linked (GlcNAc...) asparagine). The 136-residue stretch at 362 to 497 folds into the Plastocyanin-like 3 domain; that stretch reads KSPKVPTLYS…GLVATFVEAP (136 aa). Residues His-412, His-415, and His-417 each contribute to the Cu cation site. Residue Asn-428 is glycosylated (N-linked (GlcNAc...) asparagine). Cu cation-binding residues include His-478, Cys-479, His-480, and His-484. A helical transmembrane segment spans residues 553-573; the sequence is GIVALVFSCVTGILGICVVAW. Residues 574–622 are Cytoplasmic-facing; it reads YGMSQPLEEATAAVATLVREAQVTGSGTSPNHDDGNAAATEAGVLRRRT. The tract at residues 597-622 is disordered; it reads TGSGTSPNHDDGNAAATEAGVLRRRT.

The protein belongs to the multicopper oxidase family.

The protein localises to the cell membrane. In terms of biological role, cell surface ferroxidase; part of the reductive iron assimilatory system (RIA), a siderophore-independent high affinity iron uptake mechanism. Required to oxidize Fe(2+) and release it from the transporter. This chain is Iron transport multicopper oxidase fetC, found in Epichloe festucae (strain E2368).